The chain runs to 390 residues: Nucleotide-sugar uncharacterized transporter 1 (390 aa).

The next 10 membrane-spanning stretches (helical) occupy residues 61–81, 89–109, 128–148, 155–175, 182–201, 206–228, 249–269, 278–298, 306–326, and 329–349; these read ICGP…IIFM, IGFE…YLLM, SLLP…LANV, VGFY…AEFL, SFMK…VATV, FSLF…KILW, ITLL…ALSF, AILV…LALG, VVLG…IFGS, and GFIS…YTYL. Over residues 356–365 the composition is skewed to low complexity; the sequence is LKTSSSSSAL. The interval 356–390 is disordered; that stretch reads LKTSSSSSALSEKKSRFSDLKDDDKNLEPYGSEAV. The segment covering 366-382 has biased composition (basic and acidic residues); sequence SEKKSRFSDLKDDDKNL.

Belongs to the TPT transporter family. TPT (TC 2.A.7.9) subfamily.

It localises to the membrane. The protein is Nucleotide-sugar uncharacterized transporter 1 of Arabidopsis thaliana (Mouse-ear cress).